A 326-amino-acid chain; its full sequence is G-protein coupled receptor 171 (326 aa).

Residues methionine 1 to tyrosine 19 are Extracellular-facing. Residues phenylalanine 20–isoleucine 40 traverse the membrane as a helical segment. Residues glutamine 41–cysteine 48 are Cytoplasmic-facing. The helical transmembrane segment at valine 49 to valine 69 threads the bilayer. Over lysine 70 to valine 89 the chain is Extracellular. Cysteine 87 and cysteine 165 are disulfide-bonded. The chain crosses the membrane as a helical span at residues threonine 90–isoleucine 110. Residues aspartate 111–methionine 133 are Cytoplasmic-facing. Residues isoleucine 134 to isoleucine 154 form a helical membrane-spanning segment. Residues lysine 155–phenylalanine 182 are Extracellular-facing. Residues isoleucine 183–isoleucine 203 traverse the membrane as a helical segment. The Cytoplasmic portion of the chain corresponds to arginine 204 to alanine 221. A helical membrane pass occupies residues leucine 222–valine 242. Over arginine 243–glutamate 268 the chain is Extracellular. A helical membrane pass occupies residues alanine 269–serine 289. At lysine 290–cysteine 326 the chain is on the cytoplasmic side. Positions lysine 305–cysteine 326 are disordered. Residues lysine 307–aspartate 318 show a composition bias toward basic and acidic residues.

The protein belongs to the G-protein coupled receptor 1 family.

The protein localises to the cell membrane. Its function is as follows. G-protein coupled receptor for Big LEN, a 16-amino acid neuropeptide produced from the precursor protein, proSAAS (encoded by PCSK1N). Acts through a G(i)-alpha-mediated pathway in response to Big LEN. Big LEN-GPR171 system plays an important role in regulating feeding and metabolism. Also plays a role in modulating fear and anxiety-like behaviors in the basolateral amygdala. Big LEN-GPR171 modulates the mu-type opioid receptor signaling and antinociception. Acts as a negative regulator T cell function. The protein is G-protein coupled receptor 171 of Rattus norvegicus (Rat).